The sequence spans 267 residues: Small ribosomal subunit protein uS2 (267 aa).

The disordered stretch occupies residues 237 to 267 (IGESAAAPSEPALETASAEATAEGEQPGSQA). The span at 238–261 (GESAAAPSEPALETASAEATAEGE) shows a compositional bias: low complexity.

Belongs to the universal ribosomal protein uS2 family.

The polypeptide is Small ribosomal subunit protein uS2 (Chelativorans sp. (strain BNC1)).